A 224-amino-acid chain; its full sequence is MIEAKNVWKIYGKGEAKTIALKNINLKIEEGEFVMIMGPSGCGKSTLLNILALLDTPTKGEVYYKGRRTSSMSENERAIFRRKISGFIFQQFHLIKTLTALENVELPMMLDERDKSYRRKRAKKLLEMVGLGDRLNHYPHQLSGGQQQRVAIARALANNPKIIFADEPTGNLDSKSGMAVMSILKGLNEKGITIIMVTHEQELTKYASKIIKLRDGEIVEIINK.

The ABC transporter domain occupies 2 to 221; that stretch reads IEAKNVWKIY…KLRDGEIVEI (220 aa). 38–45 contributes to the ATP binding site; it reads GPSGCGKS.

This sequence belongs to the ABC transporter superfamily.

This is an uncharacterized protein from Methanocaldococcus jannaschii (strain ATCC 43067 / DSM 2661 / JAL-1 / JCM 10045 / NBRC 100440) (Methanococcus jannaschii).